Reading from the N-terminus, the 778-residue chain is ATP synthase subunit beta (778 aa).

The tract at residues 1 to 289 (MKENNKTIEA…IDIYEENEDL (289 aa)) is unknown. The segment at 290–778 (MKLNTLKSDK…KPLNSENKSN (489 aa)) is ATP synthase subunit beta. 447 to 454 (GGAGVGKT) contacts ATP.

This sequence belongs to the ATPase alpha/beta chains family. F-type ATPases have 2 components, CF(1) - the catalytic core - and CF(0) - the membrane proton channel. CF(1) has five subunits: alpha(3), beta(3), gamma(1), delta(1), epsilon(1). CF(0) has three main subunits: a(1), b(2) and c(9-12). The alpha and beta chains form an alternating ring which encloses part of the gamma chain. CF(1) is attached to CF(0) by a central stalk formed by the gamma and epsilon chains, while a peripheral stalk is formed by the delta and b chains.

It is found in the cell membrane. The enzyme catalyses ATP + H2O + 4 H(+)(in) = ADP + phosphate + 5 H(+)(out). Produces ATP from ADP in the presence of a proton gradient across the membrane. The catalytic sites are hosted primarily by the beta subunits. The sequence is that of ATP synthase subunit beta (atpD) from Malacoplasma penetrans (strain HF-2) (Mycoplasma penetrans).